The sequence spans 447 residues: Phosphoglucosamine mutase (447 aa).

Ser100 acts as the Phosphoserine intermediate in catalysis. Mg(2+)-binding residues include Ser100, Asp240, Asp242, and Asp244. Ser100 carries the post-translational modification Phosphoserine.

The protein belongs to the phosphohexose mutase family. The cofactor is Mg(2+). Activated by phosphorylation.

The catalysed reaction is alpha-D-glucosamine 1-phosphate = D-glucosamine 6-phosphate. Catalyzes the conversion of glucosamine-6-phosphate to glucosamine-1-phosphate. This chain is Phosphoglucosamine mutase, found in Anoxybacillus flavithermus (strain DSM 21510 / WK1).